We begin with the raw amino-acid sequence, 175 residues long: Major MR/P fimbria protein (175 aa).

An N-terminal signal peptide occupies residues 1-23; the sequence is MKLNKLALVLGLGLSVVAGSALA. An intrachain disulfide couples C42 to C81.

This sequence belongs to the fimbrial protein family.

The protein resides in the fimbrium. Its function is as follows. Major structural component of mannose-resistant/proteus-like fimbriae of P.mirabilis. This chain is Major MR/P fimbria protein (mrpA), found in Proteus mirabilis (strain HI4320).